Consider the following 234-residue polypeptide: ATP synthase subunit a 2 (234 aa).

Helical transmembrane passes span 20–40, 78–98, 107–127, 169–189, and 194–214; these read ATLI…WFVT, YLPF…LSVI, SLST…LYGV, VMSG…FFPV, and LGLL…MVFI.

The protein belongs to the ATPase A chain family. F-type ATPases have 2 components, CF(1) - the catalytic core - and CF(0) - the membrane proton channel. CF(1) has five subunits: alpha(3), beta(3), gamma(1), delta(1), epsilon(1). CF(0) has four main subunits: a, b, b' and c.

The protein resides in the cellular thylakoid membrane. Functionally, key component of the proton channel; it plays a direct role in the translocation of protons across the membrane. This chain is ATP synthase subunit a 2, found in Acaryochloris marina (strain MBIC 11017).